Reading from the N-terminus, the 1067-residue chain is Tricorn protease homolog 1 (1067 aa).

The tract at residues 518–551 is disordered; the sequence is TTPSPFGPQRHGRPFETPDREETPDSEGTPTTRI. Residues 530 to 540 show a composition bias toward basic and acidic residues; sequence RPFETPDREET. Residue His740 is the Charge relay system of the active site. The interval 754 to 851 is PDZ-like; sequence RQGLLGADLS…HAVVVPLADE (98 aa). Gly914 provides a ligand contact to substrate. Catalysis depends on Ser961, which acts as the Nucleophile. Catalysis depends on Glu1019, which acts as the Charge relay system.

Belongs to the peptidase S41B family. As to quaternary structure, forms a homohexameric complex; it is not known if it assembles into higher-order structures.

The protein resides in the cytoplasm. With respect to regulation, stimulated by MgCl2. Degrades oligopeptides in a sequential manner. The chain is Tricorn protease homolog 1 (tri1) from Streptomyces coelicolor (strain ATCC BAA-471 / A3(2) / M145).